A 296-amino-acid chain; its full sequence is Formamidopyrimidine-DNA glycosylase (296 aa).

Proline 2 (schiff-base intermediate with DNA) is an active-site residue. Glutamate 3 functions as the Proton donor in the catalytic mechanism. The active-site Proton donor; for beta-elimination activity is the lysine 58. Residues histidine 104, arginine 126, and lysine 169 each contribute to the DNA site. Residues 260 to 296 (SVYDRESQACRTPGCGGTVARIVQAGRSTFYCATCQK) form an FPG-type zinc finger. Catalysis depends on arginine 286, which acts as the Proton donor; for delta-elimination activity.

It belongs to the FPG family. In terms of assembly, monomer. Zn(2+) serves as cofactor.

The catalysed reaction is Hydrolysis of DNA containing ring-opened 7-methylguanine residues, releasing 2,6-diamino-4-hydroxy-5-(N-methyl)formamidopyrimidine.. It catalyses the reaction 2'-deoxyribonucleotide-(2'-deoxyribose 5'-phosphate)-2'-deoxyribonucleotide-DNA = a 3'-end 2'-deoxyribonucleotide-(2,3-dehydro-2,3-deoxyribose 5'-phosphate)-DNA + a 5'-end 5'-phospho-2'-deoxyribonucleoside-DNA + H(+). Functionally, involved in base excision repair of DNA damaged by oxidation or by mutagenic agents. Acts as a DNA glycosylase that recognizes and removes damaged bases. Has a preference for oxidized purines, such as 7,8-dihydro-8-oxoguanine (8-oxoG). Has AP (apurinic/apyrimidinic) lyase activity and introduces nicks in the DNA strand. Cleaves the DNA backbone by beta-delta elimination to generate a single-strand break at the site of the removed base with both 3'- and 5'-phosphates. The sequence is that of Formamidopyrimidine-DNA glycosylase from Rhizobium johnstonii (strain DSM 114642 / LMG 32736 / 3841) (Rhizobium leguminosarum bv. viciae).